An 855-amino-acid polypeptide reads, in one-letter code: Leucine--tRNA ligase (855 aa).

Positions 42 to 52 (PYPSGSLHVGH) match the 'HIGH' region motif. The segment at 292–311 (SEMDRTAEDKPKKGIPTGGK) is disordered. A compositionally biased stretch (basic and acidic residues) spans 293 to 303 (EMDRTAEDKPK). The short motif at 614–618 (KMSKS) is the 'KMSKS' region element. Residue Lys617 coordinates ATP.

The protein belongs to the class-I aminoacyl-tRNA synthetase family.

Its subcellular location is the cytoplasm. The catalysed reaction is tRNA(Leu) + L-leucine + ATP = L-leucyl-tRNA(Leu) + AMP + diphosphate. The chain is Leucine--tRNA ligase from Acaryochloris marina (strain MBIC 11017).